A 178-amino-acid chain; its full sequence is Cell division protein SepF (178 aa).

Over residues 19 to 45 the composition is skewed to basic and acidic residues; that stretch reads EHYESEHHTPHKDEDDSMEHDREERRA. A disordered region spans residues 19 to 65; sequence EHYESEHHTPHKDEDDSMEHDREERRAPAPVREIARETPTPHAAEEE.

It belongs to the SepF family. Homodimer. Interacts with FtsZ.

The protein resides in the cytoplasm. In terms of biological role, cell division protein that is part of the divisome complex and is recruited early to the Z-ring. Probably stimulates Z-ring formation, perhaps through the cross-linking of FtsZ protofilaments. Its function overlaps with FtsA. The sequence is that of Cell division protein SepF from Arthrobacter sp. (strain FB24).